The primary structure comprises 341 residues: THO complex subunit 6 homolog (341 aa).

7 WD repeats span residues 22–61 (RLHM…SSEA), 74–112 (AHDG…GCKE), 124–163 (LEVP…FTRA), 166–205 (GHTD…EVQT), 215–254 (SRPH…PTTV), 256–293 (PIRA…KAQV), and 295–339 (GSSP…AFSL). Residue Ser-180 is modified to Phosphoserine.

It belongs to the WD repeat THOC6 family. In terms of assembly, component of the THO subcomplex, which is composed of THOC1, THOC2, THOC3, THOC5, THOC6 and THOC7. The THO subcomplex interacts with DDX39B to form the THO-DDX39B complex which multimerizes into a 28-subunit tetrameric assembly. Component of the transcription/export (TREX) complex at least composed of ALYREF/THOC4, DDX39B, SARNP/CIP29, CHTOP and the THO subcomplex; in the complex interacts with THOC5; together with THOC5 and THOC7, plays a key structural role in the oligomerization of the THO-DDX39B complex. TREX seems to have a dynamic structure involving ATP-dependent remodeling.

It is found in the nucleus. Its subcellular location is the nucleus speckle. Functionally, component of the THO subcomplex of the TREX complex which is thought to couple mRNA transcription, processing and nuclear export, and which specifically associates with spliced mRNA and not with unspliced pre-mRNA. Plays a key structural role in the oligomerization of the THO-DDX39B complex. TREX is recruited to spliced mRNAs by a transcription-independent mechanism, binds to mRNA upstream of the exon-junction complex (EJC) and is recruited in a splicing- and cap-dependent manner to a region near the 5' end of the mRNA where it functions in mRNA export to the cytoplasm via the TAP/NXF1 pathway. Plays a role in apoptosis negative control involved in brain development. In Rattus norvegicus (Rat), this protein is THO complex subunit 6 homolog (Thoc6).